A 931-amino-acid chain; its full sequence is Transportin (931 aa).

19 HEAT repeats span residues 10–37 (GLKQLVYVLNLSNSTSREVHDQIREELD), 42–79 (VPDYNNYLTLIFKSNELQPHIRSVAGLVLKTNIKQYFE), 88–121 (YIKREILPVLSDPDASVRHTVGNIITNLIKKSCF), 127–164 (LLPALNLALDSNSQDLIEGSLYTLSLLCEDSTKKLDSD), 171–201 (NQLIPKLIMFFKCNNADFRKKALVSISYFII), 214–241 (FLKGIFSMSEDPSEAVRTNVCKTLVTLV), 253–280 (KDVIQYMLHATKDKSEEVALEACEFWTA), 296–421 (PVLV…LSGI), 430–459 (VTLPLIEQRMNEQNPWPVRESAILALGAIA), 471–498 (SKVIPYLINTLNDPKPLVRSITCWTLSR), 512–545 (LHPLVVNLLNRIVDNNKKVQEAACSAFATLEEEA), 553–586 (LQMILVTFVNAFGKYQAKNLLILYDAISTLAKVV), 594–632 (ELINILVPPLLQKFNALDDSNKNLLPLLGCLNQVCSSIG), 640–693 (SLFF…GIGT), 704–735 (LPHLLLQCMNLRGSDVLQSSFALLGDMSKFCL), 743–776 (PDYLNILTNNLYPEYLSVCNNASWAIGEIAIRMP), 784–819 (VAIRDRLISNINKVNLNRGVLENTAVTIGRLGIVSP), 827–860 (DKFIQCWCMAIRRKTDDIEKDSAFRGMWLIINNN), and 869–900 (VYICDAVASWDKMQPDLYEAYFKLLHMYKTSM). An Importin N-terminal domain is found at 32–99 (IREELDKFHS…KREILPVLSD (68 aa)). Residues 317–401 (DQGDDSMTPD…DDDDDDDGFE (85 aa)) form a disordered region. A compositionally biased stretch (low complexity) spans 358-381 (DNNNNSNNNNSSNNNSSNNNNNNN). Positions 382–401 (NEDDEEYNDDDDDDDDDGFE) are enriched in acidic residues.

Belongs to the importin beta family. Importin beta-2 subfamily. In terms of assembly, forms a complex with an importin alpha subunit.

The protein resides in the cytoplasm. It is found in the nucleus envelope. In terms of biological role, functions in nuclear protein import via a substrate-importin alpha-beta transport complex that passes though the nuclear pore complexes (NPC). Mediates docking of the substrate-importin complex to distinct nucleoporins. The polypeptide is Transportin (tnpo) (Dictyostelium discoideum (Social amoeba)).